A 1011-amino-acid polypeptide reads, in one-letter code: Cell division cycle-associated protein 2 (1011 aa).

The span at 1–22 (MDTCSQESEPLQTKESPINNAG) shows a compositional bias: polar residues. The tract at residues 1-26 (MDTCSQESEPLQTKESPINNAGKTPL) is disordered. Phosphoserine occurs at positions 125, 130, 209, 293, and 310. Thr313 is modified (phosphothreonine). The PP1-binding domain maps to 380–440 (KRKRVTFGED…PEWLPQPNFD (61 aa)). Phosphoserine occurs at positions 391 and 398. Disordered regions lie at residues 395–438 (LDES…PQPN) and 522–544 (PCKEKKTNRRKSQESKHADKVLP). Thr403 is subject to Phosphothreonine. Residues 418–431 (SSLSPPLLEQSPVP) show a composition bias toward low complexity. The residue at position 428 (Ser428) is a Phosphoserine. A compositionally biased stretch (basic and acidic residues) spans 522–543 (PCKEKKTNRRKSQESKHADKVL). A phosphoserine mark is found at Ser583, Ser702, and Ser747. Lys753 is covalently cross-linked (Glycyl lysine isopeptide (Lys-Gly) (interchain with G-Cter in SUMO2)). The span at 790–803 (DQRKVSKSQGEDLG) shows a compositional bias: basic and acidic residues. 2 disordered regions span residues 790–835 (DQRK…GLHL) and 896–1011 (GLVW…LSEN). Residues 931 to 945 (SSRQDPCTLPSTSSE) are compositionally biased toward polar residues. The residue at position 967 (Ser967) is a Phosphoserine. Residues 968–983 (FCTSTLANPKSTTQSR) show a composition bias toward polar residues. The span at 993-1011 (QKRENTLQETSRESDLSEN) shows a compositional bias: basic and acidic residues.

Interacts with PPP1CC. Post-translationally, phosphorylated by CDK1. May regulate its subcellular location.

It is found in the nucleus. Regulator of chromosome structure during mitosis required for condensin-depleted chromosomes to retain their compact architecture through anaphase. Acts by mediating the recruitment of phopsphatase PP1-gamma subunit (PPP1CC) to chromatin at anaphase and into the following interphase. At anaphase onset, its association with chromatin targets a pool of PPP1CC to dephosphorylate substrates. This is Cell division cycle-associated protein 2 (CDCA2) from Bos taurus (Bovine).